Here is a 432-residue protein sequence, read N- to C-terminus: Trigger factor (432 aa).

The 86-residue stretch at Gly161–Pro246 folds into the PPIase FKBP-type domain.

It belongs to the FKBP-type PPIase family. Tig subfamily.

It is found in the cytoplasm. It carries out the reaction [protein]-peptidylproline (omega=180) = [protein]-peptidylproline (omega=0). Functionally, involved in protein export. Acts as a chaperone by maintaining the newly synthesized protein in an open conformation. Functions as a peptidyl-prolyl cis-trans isomerase. The polypeptide is Trigger factor (Vibrio vulnificus (strain CMCP6)).